Reading from the N-terminus, the 325-residue chain is Small ribosomal subunit biogenesis GTPase RsgA (325 aa).

The region spanning 80–241 is the CP-type G domain; it reads LSKQIHIIAS…IIDTPGIKGF (162 aa). GTP is bound by residues 129–132 and 183–191; these read NKID and GHSGVGKST. Zn(2+) is bound by residues Cys265, Cys270, His272, and Cys278.

The protein belongs to the TRAFAC class YlqF/YawG GTPase family. RsgA subfamily. As to quaternary structure, monomer. Associates with 30S ribosomal subunit, binds 16S rRNA. Requires Zn(2+) as cofactor.

The protein localises to the cytoplasm. Functionally, one of several proteins that assist in the late maturation steps of the functional core of the 30S ribosomal subunit. Helps release RbfA from mature subunits. May play a role in the assembly of ribosomal proteins into the subunit. Circularly permuted GTPase that catalyzes slow GTP hydrolysis, GTPase activity is stimulated by the 30S ribosomal subunit. The polypeptide is Small ribosomal subunit biogenesis GTPase RsgA (Flavobacterium johnsoniae (strain ATCC 17061 / DSM 2064 / JCM 8514 / BCRC 14874 / CCUG 350202 / NBRC 14942 / NCIMB 11054 / UW101) (Cytophaga johnsonae)).